Reading from the N-terminus, the 365-residue chain is tRNA N6-adenosine threonylcarbamoyltransferase (365 aa).

Residues H111 and H115 each contribute to the Fe cation site. Substrate is bound by residues 140-144, D173, G186, and N298; that span reads IVSGG. D323 is a binding site for Fe cation.

Belongs to the KAE1 / TsaD family. It depends on Fe(2+) as a cofactor.

It is found in the cytoplasm. The catalysed reaction is L-threonylcarbamoyladenylate + adenosine(37) in tRNA = N(6)-L-threonylcarbamoyladenosine(37) in tRNA + AMP + H(+). In terms of biological role, required for the formation of a threonylcarbamoyl group on adenosine at position 37 (t(6)A37) in tRNAs that read codons beginning with adenine. Is involved in the transfer of the threonylcarbamoyl moiety of threonylcarbamoyl-AMP (TC-AMP) to the N6 group of A37, together with TsaE and TsaB. TsaD likely plays a direct catalytic role in this reaction. The sequence is that of tRNA N6-adenosine threonylcarbamoyltransferase from Thermomicrobium roseum (strain ATCC 27502 / DSM 5159 / P-2).